The following is a 190-amino-acid chain: Putative 3-methyladenine DNA glycosylase (190 aa).

This sequence belongs to the DNA glycosylase MPG family.

The polypeptide is Putative 3-methyladenine DNA glycosylase (Deinococcus radiodurans (strain ATCC 13939 / DSM 20539 / JCM 16871 / CCUG 27074 / LMG 4051 / NBRC 15346 / NCIMB 9279 / VKM B-1422 / R1)).